The primary structure comprises 172 residues: uncharacterized protein (172 aa).

Disordered stretches follow at residues 1–39 (MAKVSNYNNNNNNNNNNNNNNNNNNNYNQNSNNNINSNN) and 90–112 (DLNGDDTFNDSNNDNSPSRGSIN). The segment covering 98-110 (NDSNNDNSPSRGS) has biased composition (low complexity).

This is an uncharacterized protein from Dictyostelium discoideum (Social amoeba).